Here is a 242-residue protein sequence, read N- to C-terminus: MSTLILIPARMASTRLPGKPLADISGAPMIVHVARRAAEAGLGRVVVATDTQSVAEAVRAHGFEAVMTRIDHESGSDRIHEALAALDPGRKVETIVNVQGDLPTIDPGIIAASLRPFEDAAVDIATLGVEIVREEEKTNPNVVKIVGSPLSATRLRALYFTRATAPWGEGPLYHHVGLYAYRRSALERFVALKPSPLERRERLEQLRALEAGMRIDAEIVRSLPLGVDTPQDLERARTILSN.

This sequence belongs to the KdsB family.

The protein localises to the cytoplasm. It catalyses the reaction 3-deoxy-alpha-D-manno-oct-2-ulosonate + CTP = CMP-3-deoxy-beta-D-manno-octulosonate + diphosphate. It functions in the pathway nucleotide-sugar biosynthesis; CMP-3-deoxy-D-manno-octulosonate biosynthesis; CMP-3-deoxy-D-manno-octulosonate from 3-deoxy-D-manno-octulosonate and CTP: step 1/1. It participates in bacterial outer membrane biogenesis; lipopolysaccharide biosynthesis. In terms of biological role, activates KDO (a required 8-carbon sugar) for incorporation into bacterial lipopolysaccharide in Gram-negative bacteria. The sequence is that of 3-deoxy-manno-octulosonate cytidylyltransferase from Mesorhizobium japonicum (strain LMG 29417 / CECT 9101 / MAFF 303099) (Mesorhizobium loti (strain MAFF 303099)).